The sequence spans 262 residues: Electron transfer flavoprotein beta subunit lysine methyltransferase (262 aa).

The transit peptide at 1–38 (MALSLGWKAHRNHCGLLLQALRSSGLLLFPCGQCPWRG) directs the protein to the mitochondrion.

It belongs to the methyltransferase superfamily. ETFBKMT family. As to quaternary structure, interacts with HSPD1; this protein may possibly be a methylation substrate.

It is found in the cytoplasm. It localises to the mitochondrion matrix. It carries out the reaction L-lysyl-[protein] + 3 S-adenosyl-L-methionine = N(6),N(6),N(6)-trimethyl-L-lysyl-[protein] + 3 S-adenosyl-L-homocysteine + 3 H(+). Its function is as follows. Protein-lysine methyltransferase that selectively trimethylates the flavoprotein ETFB in mitochondria. Thereby, may negatively regulate the function of ETFB in electron transfer from Acyl-CoA dehydrogenases to the main respiratory chain. The chain is Electron transfer flavoprotein beta subunit lysine methyltransferase from Homo sapiens (Human).